A 214-amino-acid chain; its full sequence is Probable transaldolase (214 aa).

Lys83 functions as the Schiff-base intermediate with substrate in the catalytic mechanism.

It belongs to the transaldolase family. Type 3B subfamily.

Its subcellular location is the cytoplasm. It catalyses the reaction D-sedoheptulose 7-phosphate + D-glyceraldehyde 3-phosphate = D-erythrose 4-phosphate + beta-D-fructose 6-phosphate. It functions in the pathway carbohydrate degradation; pentose phosphate pathway; D-glyceraldehyde 3-phosphate and beta-D-fructose 6-phosphate from D-ribose 5-phosphate and D-xylulose 5-phosphate (non-oxidative stage): step 2/3. Its function is as follows. Transaldolase is important for the balance of metabolites in the pentose-phosphate pathway. The protein is Probable transaldolase of Leptospira biflexa serovar Patoc (strain Patoc 1 / Ames).